We begin with the raw amino-acid sequence, 331 residues long: D-alanine--D-alanine ligase (331 aa).

The 207-residue stretch at 121–327 (KLWYDALGIP…FSQFLENCVR (207 aa)) folds into the ATP-grasp domain. Residue 151-206 (AFESWGKVFVKAARQGSSVGCYQVNQVEELSEAINKAFTFSDQVLIEKSVVPRELE) coordinates ATP. 3 residues coordinate Mg(2+): Asp-281, Glu-294, and Asn-296.

Belongs to the D-alanine--D-alanine ligase family. Requires Mg(2+) as cofactor. Mn(2+) serves as cofactor.

It localises to the cytoplasm. The catalysed reaction is 2 D-alanine + ATP = D-alanyl-D-alanine + ADP + phosphate + H(+). It participates in cell wall biogenesis; peptidoglycan biosynthesis. Its function is as follows. Cell wall formation. This chain is D-alanine--D-alanine ligase, found in Vibrio atlanticus (strain LGP32) (Vibrio splendidus (strain Mel32)).